Here is a 519-residue protein sequence, read N- to C-terminus: Alternative NAD(P)H-ubiquinone oxidoreductase C1, chloroplastic/mitochondrial (519 aa).

Residues 1 to 52 (MAVLSSVSSLIPFSYGATRLTSKASLASRTSGFNLSSRWNSTRNSPMLYLSR) constitute a chloroplast and mitochondrion transit peptide. An FAD-binding site is contributed by 82–118 (RVCILGGGFGGLYTALRLESLVWPEDKKPQVVLVDQS). 246–282 (IKVAVVGCGYAGVELAATISERLQDRGIVQSINVSKN) contributes to the NAD(+) binding site.

Belongs to the NADH dehydrogenase family. Requires FAD as cofactor. In terms of tissue distribution, flowers, roots, leaves and stems.

Its subcellular location is the mitochondrion. It localises to the mitochondrion inner membrane. It is found in the plastid. The protein resides in the chloroplast. The protein localises to the plastoglobule. The catalysed reaction is a quinone + NADH + H(+) = a quinol + NAD(+). It carries out the reaction a ubiquinone + NADH + H(+) = a ubiquinol + NAD(+). The enzyme catalyses demethylphylloquinone + NADPH + H(+) = demethylphylloquinol + NADP(+). With respect to regulation, inhibited by dicumarol. In terms of biological role, bifunctional oxidoreductase ables to act both on prenyl naphthoquinones and on prenyl benzoquinones. May serve a respiratory function. Involved in an electron flow toward the plastoglobule plastoquinone pool. Required for plastochromanol-8 accumulation and for phylloquinone (vitamin K1) production. Probably not directly involved in cyclic or chlororespiratory electron flows under standard growth conditions, but participates in the redox metabolism of plastoquinone-9 and the tocophrol recycling-intermediate alpha-tocopherol quinone. Catalyzes the penultimate step in the biosynthesis of vitamin K1. This Arabidopsis thaliana (Mouse-ear cress) protein is Alternative NAD(P)H-ubiquinone oxidoreductase C1, chloroplastic/mitochondrial.